The primary structure comprises 525 residues: tRNA-splicing endonuclease subunit Sen54 (525 aa).

M1 carries the N-acetylmethionine modification. The interval 1–46 is disordered; the sequence is MEPEPEPGSVEVPAGRVLSASELRAARSRSQKLPQRSHGPKDFLPD. Residues 7–23 are compositionally biased toward low complexity; it reads PGSVEVPAGRVLSASEL. S178 carries the phosphoserine modification. Y180 carries the phosphotyrosine modification. The span at 220–232 shows a compositional bias: low complexity; the sequence is LPPVSLAASSSPA. The interval 220 to 273 is disordered; that stretch reads LPPVSLAASSSPACDQSSQYPEEKSQDSSPRQGSELPLQFLGSSEPCSDLARED.

It belongs to the SEN54 family. TRNA splicing endonuclease is a heterotetramer composed of TSEN2, TSEN15, TSEN34/LENG5 and TSEN54. tRNA splicing endonuclease complex also contains proteins of the pre-mRNA 3'-end processing machinery such as CLP1, CPSF1, CPSF4 and CSTF2.

The protein localises to the nucleus. It is found in the nucleolus. Its function is as follows. Non-catalytic subunit of the tRNA-splicing endonuclease complex, a complex responsible for identification and cleavage of the splice sites in pre-tRNA. It cleaves pre-tRNA at the 5' and 3' splice sites to release the intron. The products are an intron and two tRNA half-molecules bearing 2',3' cyclic phosphate and 5'-OH termini. There are no conserved sequences at the splice sites, but the intron is invariably located at the same site in the gene, placing the splice sites an invariant distance from the constant structural features of the tRNA body. The tRNA splicing endonuclease is also involved in mRNA processing via its association with pre-mRNA 3'-end processing factors, establishing a link between pre-tRNA splicing and pre-mRNA 3'-end formation, suggesting that the endonuclease subunits function in multiple RNA-processing events. This is tRNA-splicing endonuclease subunit Sen54 (Tsen54) from Mus musculus (Mouse).